A 405-amino-acid polypeptide reads, in one-letter code: Phosphopentomutase (405 aa).

Mn(2+)-binding residues include D10, D305, H310, D346, H347, and H358.

The protein belongs to the phosphopentomutase family. The cofactor is Mn(2+).

The protein localises to the cytoplasm. It catalyses the reaction 2-deoxy-alpha-D-ribose 1-phosphate = 2-deoxy-D-ribose 5-phosphate. The enzyme catalyses alpha-D-ribose 1-phosphate = D-ribose 5-phosphate. It functions in the pathway carbohydrate degradation; 2-deoxy-D-ribose 1-phosphate degradation; D-glyceraldehyde 3-phosphate and acetaldehyde from 2-deoxy-alpha-D-ribose 1-phosphate: step 1/2. Its function is as follows. Isomerase that catalyzes the conversion of deoxy-ribose 1-phosphate (dRib-1-P) and ribose 1-phosphate (Rib-1-P) to deoxy-ribose 5-phosphate (dRib-5-P) and ribose 5-phosphate (Rib-5-P), respectively. In Methylorubrum extorquens (strain CM4 / NCIMB 13688) (Methylobacterium extorquens), this protein is Phosphopentomutase.